The sequence spans 267 residues: Diphthine synthase (267 aa).

Residues Leu-9, Asp-87, Ile-90, 115–116 (SI), Leu-166, Leu-205, and His-230 each bind S-adenosyl-L-methionine.

Belongs to the diphthine synthase family. In terms of assembly, homodimer.

It catalyses the reaction 2-[(3S)-amino-3-carboxypropyl]-L-histidyl-[translation elongation factor 2] + 3 S-adenosyl-L-methionine = diphthine-[translation elongation factor 2] + 3 S-adenosyl-L-homocysteine + 3 H(+). The protein operates within protein modification; peptidyl-diphthamide biosynthesis. In terms of biological role, S-adenosyl-L-methionine-dependent methyltransferase that catalyzes the trimethylation of the amino group of the modified target histidine residue in translation elongation factor 2 (EF-2), to form an intermediate called diphthine. The three successive methylation reactions represent the second step of diphthamide biosynthesis. The protein is Diphthine synthase of Staphylothermus marinus (strain ATCC 43588 / DSM 3639 / JCM 9404 / F1).